A 135-amino-acid polypeptide reads, in one-letter code: MVHAIFCAHGQLAGAMLDSVCMVYGEVNVSAVAFVPGENAADIAINLEKLVSAHTDEEWVIAVDLQCGSPWNAAAGLAMRHPQIRVISGLSLPLALELVDNQHTLSADDLCQHLQAIASQCCVVWQQPETVEEEF.

One can recognise a PTS EIIA type-4 domain in the interval 1 to 131 (MVHAIFCAHG…CVVWQQPETV (131 aa)). His-9 (tele-phosphohistidine intermediate) is an active-site residue. His-9 carries the post-translational modification Phosphohistidine; by HPr.

The protein localises to the cytoplasm. The phosphoenolpyruvate-dependent sugar phosphotransferase system (PTS), a major carbohydrate active transport system, catalyzes the phosphorylation of incoming sugar substrates concomitant with their translocation across the cell membrane. The enzyme II SorABFM PTS system is involved in L-sorbose transport. In Klebsiella pneumoniae, this protein is PTS system sorbose-specific EIIA component.